A 185-amino-acid chain; its full sequence is Elongation factor P (185 aa).

The protein belongs to the elongation factor P family.

Its subcellular location is the cytoplasm. It functions in the pathway protein biosynthesis; polypeptide chain elongation. In terms of biological role, involved in peptide bond synthesis. Stimulates efficient translation and peptide-bond synthesis on native or reconstituted 70S ribosomes in vitro. Probably functions indirectly by altering the affinity of the ribosome for aminoacyl-tRNA, thus increasing their reactivity as acceptors for peptidyl transferase. This Burkholderia ambifaria (strain MC40-6) protein is Elongation factor P.